A 71-amino-acid polypeptide reads, in one-letter code: Cytochrome c oxidase subunit 7, mitochondrial (71 aa).

The Mitochondrial matrix portion of the chain corresponds to 1 to 35 (MPGLVNAPNHVPEKQRYYQQAFKNHTRLWKIGPRS). Residues 36-58 (GIIMTTFNIAMWGTFGASMYAMS) form a helical membrane-spanning segment. Topologically, residues 59-71 (RKVLGYNTWFSED) are mitochondrial intermembrane.

Belongs to the cytochrome c oxidase VIIa family. In terms of assembly, component of the cytochrome c oxidase (complex IV, CIV), a multisubunit enzyme composed of 11 subunits. The complex is composed of a catalytic core of 3 subunits Cox1, Cox2 and Cox3, encoded in the mitochondrial DNA, and 8 supernumerary subunits Cox4, Cox5a/Cox5, Cox6, Cox7, Cox8, Cox7a/Cox9, Cox6b/Cox12 and Cox6a/Cox13, which are encoded in the nuclear genome. The complex exists as a monomer or a dimer and forms respiratory supercomplexes (SCs) in the inner mitochondrial membrane with NADH-ubiquinone oxidoreductase (complex I, CI) and ubiquinol-cytochrome c oxidoreductase (cytochrome b-c1 complex, complex III, CIII), resulting in various different assemblies (supercomplexes I(1)IV(1), I(1)III(3)IV(2), III(2)IV(1) and III(2)IV(2) as well as larger supercomplexes of compositions like I(1)III(2)IV(5-6)).

The protein resides in the mitochondrion inner membrane. Its pathway is energy metabolism; oxidative phosphorylation. Its function is as follows. Component of the cytochrome c oxidase, the last enzyme in the mitochondrial electron transport chain which drives oxidative phosphorylation. The respiratory chain contains 3 multisubunit complexes succinate dehydrogenase (complex II, CII), ubiquinol-cytochrome c oxidoreductase (cytochrome b-c1 complex, complex III, CIII) and cytochrome c oxidase (complex IV, CIV), that cooperate to transfer electrons derived from NADH and succinate to molecular oxygen, creating an electrochemical gradient over the inner membrane that drives transmembrane transport and the ATP synthase. Cytochrome c oxidase is the component of the respiratory chain that catalyzes the reduction of oxygen to water. Electrons originating from reduced cytochrome c in the intermembrane space (IMS) are transferred via the dinuclear copper A center (CU(A)) of Cox2 and heme A of Cox1 to the active site in Cox1, a binuclear center (BNC) formed by heme A3 and copper B (CU(B)). The BNC reduces molecular oxygen to 2 water molecules using 4 electrons from cytochrome c in the IMS and 4 protons from the mitochondrial matrix. This Neurospora crassa (strain ATCC 24698 / 74-OR23-1A / CBS 708.71 / DSM 1257 / FGSC 987) protein is Cytochrome c oxidase subunit 7, mitochondrial.